The primary structure comprises 479 residues: Flotillin-like protein 3 (479 aa).

Cys36 carries S-palmitoyl cysteine lipidation. Coiled coils occupy residues 227-251 and 306-326; these read KVKTEVKVFQNEKEALVAKADAALA and EYETKVQEANWELYNKQKQAE.

It belongs to the band 7/mec-2 family. Flotillin subfamily. May be palmitoylated.

Its subcellular location is the cell membrane. The protein localises to the membrane. The protein resides in the caveola. In terms of biological role, may act as a scaffolding protein within caveolar membranes, functionally participating in formation of caveolae or caveolae-like vesicles. The protein is Flotillin-like protein 3 (FLOT3) of Arabidopsis thaliana (Mouse-ear cress).